Here is a 37-residue protein sequence, read N- to C-terminus: Mu-agatoxin-Aa1b (37 aa).

Cystine bridges form between cysteine 2/cysteine 18, cysteine 9/cysteine 23, cysteine 17/cysteine 33, and cysteine 25/cysteine 31. At serine 37 the chain carries Serine amide.

It belongs to the neurotoxin 07 (Beta/delta-agtx) family. 01 (aga-2) subfamily. In terms of tissue distribution, expressed by the venom gland.

Its subcellular location is the secreted. Its function is as follows. Insecticidal neurotoxin that induces an irreversible spastic paralysis when injected into insects. Modifies presynaptic voltage-gated sodium channels (Nav), causing them to open at the normal resting potential of the nerve. This leads to spontaneous release of neurotransmitter and repetitive action potentials in motor neurons. The chain is Mu-agatoxin-Aa1b from Agelenopsis aperta (North American funnel-web spider).